The sequence spans 933 residues: Protein inturned (933 aa).

Residues 1–54 are disordered; that stretch reads MASLPLCGSVRSPEGLPGDPSSQEDRQDYDPEDPVSGSGSYSPTSTDSNDLEPE. A compositionally biased stretch (polar residues) spans 37–48; sequence GSGSYSPTSTDS. One can recognise a PDZ domain in the interval 186–264; it reads LVGIIHQTKW…PMQVKLTFEN (79 aa). Phosphoserine is present on Ser-675. Residues 703 to 742 are disordered; the sequence is LKTRKPSPSRSGGPDSGLEGEGVGLSPHTTESQGSHGSEE. The segment covering 710–719 has biased composition (low complexity); it reads PSRSGGPDSG. The span at 729-738 shows a compositional bias: polar residues; it reads PHTTESQGSH.

Belongs to the inturned family. As to quaternary structure, component of the CPLANE (ciliogenesis and planar polarity effectors) complex, composed of INTU, FUZ and WDPCP. Interacts with CPLANE1. Interacts with NPHP4 and DAAM1; INTU is mediating the interaction between NPHP4 and DAAM1.

It localises to the cytoplasm. The protein localises to the cell surface. The protein resides in the cytoskeleton. It is found in the cilium basal body. Its subcellular location is the microtubule organizing center. It localises to the centrosome. The protein localises to the centriole. Functionally, plays a key role in ciliogenesis and embryonic development. Regulator of cilia formation by controlling the organization of the apical actin cytoskeleton and the positioning of the basal bodies at the apical cell surface, which in turn is essential for the normal orientation of elongating ciliary microtubules. Plays a key role in definition of cell polarity via its role in ciliogenesis but not via conversion extension. Has an indirect effect on hedgehog signaling. Proposed to function as core component of the CPLANE (ciliogenesis and planar polarity effectors) complex involved in the recruitment of peripheral IFT-A proteins to basal bodies. Required for recruitment of CPLANE2 to the mother centriole. Binds phosphatidylinositol 3-phosphate with highest affinity, followed by phosphatidylinositol 4-phosphate and phosphatidylinositol 5-phosphate. The chain is Protein inturned (INTU) from Bos taurus (Bovine).